The chain runs to 299 residues: Protoheme IX farnesyltransferase (299 aa).

9 consecutive transmembrane segments (helical) span residues 25-45 (VVLL…RAGV), 47-67 (WTVL…AAAV), 95-115 (AAAI…LLLF), 119-139 (LAAW…TGFL), 147-167 (IVIG…AVTG), 173-193 (PLLL…ALAI), 218-238 (VHIL…YAIH), 243-263 (LYLV…WVLY), and 279-299 (IWYL…LLNI).

Belongs to the UbiA prenyltransferase family. Protoheme IX farnesyltransferase subfamily.

It localises to the cell inner membrane. The enzyme catalyses heme b + (2E,6E)-farnesyl diphosphate + H2O = Fe(II)-heme o + diphosphate. It functions in the pathway porphyrin-containing compound metabolism; heme O biosynthesis; heme O from protoheme: step 1/1. Its function is as follows. Converts heme B (protoheme IX) to heme O by substitution of the vinyl group on carbon 2 of heme B porphyrin ring with a hydroxyethyl farnesyl side group. This Ectopseudomonas mendocina (strain ymp) (Pseudomonas mendocina) protein is Protoheme IX farnesyltransferase.